Consider the following 245-residue polypeptide: 1-(5-phosphoribosyl)-5-[(5-phosphoribosylamino)methylideneamino] imidazole-4-carboxamide isomerase (245 aa).

Aspartate 8 acts as the Proton acceptor in catalysis. Aspartate 131 serves as the catalytic Proton donor.

The protein belongs to the HisA/HisF family.

The protein localises to the cytoplasm. It catalyses the reaction 1-(5-phospho-beta-D-ribosyl)-5-[(5-phospho-beta-D-ribosylamino)methylideneamino]imidazole-4-carboxamide = 5-[(5-phospho-1-deoxy-D-ribulos-1-ylimino)methylamino]-1-(5-phospho-beta-D-ribosyl)imidazole-4-carboxamide. The protein operates within amino-acid biosynthesis; L-histidine biosynthesis; L-histidine from 5-phospho-alpha-D-ribose 1-diphosphate: step 4/9. The chain is 1-(5-phosphoribosyl)-5-[(5-phosphoribosylamino)methylideneamino] imidazole-4-carboxamide isomerase from Neisseria meningitidis serogroup C (strain 053442).